Consider the following 226-residue polypeptide: Small ribosomal subunit protein uS2c (226 aa).

It belongs to the universal ribosomal protein uS2 family.

The protein resides in the plastid. It localises to the chloroplast. The chain is Small ribosomal subunit protein uS2c (rps2) from Ostreococcus tauri.